The sequence spans 270 residues: 4-hydroxy-tetrahydrodipicolinate reductase (270 aa).

NAD(+) contacts are provided by residues 9-14 (GAGGRM) and Glu-35. Arg-36 lines the NADP(+) pocket. Residues 99-101 (GTT) and 123-126 (ASNY) contribute to the NAD(+) site. His-156 serves as the catalytic Proton donor/acceptor. His-157 contributes to the (S)-2,3,4,5-tetrahydrodipicolinate binding site. Lys-160 functions as the Proton donor in the catalytic mechanism. 166 to 167 (GT) serves as a coordination point for (S)-2,3,4,5-tetrahydrodipicolinate.

The protein belongs to the DapB family.

The protein localises to the cytoplasm. The enzyme catalyses (S)-2,3,4,5-tetrahydrodipicolinate + NAD(+) + H2O = (2S,4S)-4-hydroxy-2,3,4,5-tetrahydrodipicolinate + NADH + H(+). The catalysed reaction is (S)-2,3,4,5-tetrahydrodipicolinate + NADP(+) + H2O = (2S,4S)-4-hydroxy-2,3,4,5-tetrahydrodipicolinate + NADPH + H(+). The protein operates within amino-acid biosynthesis; L-lysine biosynthesis via DAP pathway; (S)-tetrahydrodipicolinate from L-aspartate: step 4/4. Functionally, catalyzes the conversion of 4-hydroxy-tetrahydrodipicolinate (HTPA) to tetrahydrodipicolinate. This chain is 4-hydroxy-tetrahydrodipicolinate reductase, found in Actinobacillus succinogenes (strain ATCC 55618 / DSM 22257 / CCUG 43843 / 130Z).